A 190-amino-acid polypeptide reads, in one-letter code: 2-phospho-L-lactate guanylyltransferase (190 aa).

It belongs to the CofC family. As to quaternary structure, homodimer.

It catalyses the reaction (2S)-2-phospholactate + GTP + H(+) = (2S)-lactyl-2-diphospho-5'-guanosine + diphosphate. Its pathway is cofactor biosynthesis; coenzyme F420 biosynthesis. Guanylyltransferase that catalyzes the activation of (2S)-2-phospholactate (2-PL) as (2S)-lactyl-2-diphospho-5'-guanosine, via the condensation of 2-PL with GTP. It is involved in the biosynthesis of coenzyme F420, a hydride carrier cofactor. This is 2-phospho-L-lactate guanylyltransferase from Methanopyrus kandleri (strain AV19 / DSM 6324 / JCM 9639 / NBRC 100938).